The chain runs to 196 residues: dITP/XTP pyrophosphatase (196 aa).

T8–K13 is a binding site for substrate. 2 residues coordinate Mg(2+): E41 and D70. Residue D70 is the Proton acceptor of the active site. Residues S71, F153–D156, K176, and H181–R182 each bind substrate.

The protein belongs to the HAM1 NTPase family. In terms of assembly, homodimer. Mg(2+) is required as a cofactor.

It catalyses the reaction XTP + H2O = XMP + diphosphate + H(+). The enzyme catalyses dITP + H2O = dIMP + diphosphate + H(+). It carries out the reaction ITP + H2O = IMP + diphosphate + H(+). Its function is as follows. Pyrophosphatase that catalyzes the hydrolysis of nucleoside triphosphates to their monophosphate derivatives, with a high preference for the non-canonical purine nucleotides XTP (xanthosine triphosphate), dITP (deoxyinosine triphosphate) and ITP. Seems to function as a house-cleaning enzyme that removes non-canonical purine nucleotides from the nucleotide pool, thus preventing their incorporation into DNA/RNA and avoiding chromosomal lesions. The chain is dITP/XTP pyrophosphatase from Bacillus licheniformis (strain ATCC 14580 / DSM 13 / JCM 2505 / CCUG 7422 / NBRC 12200 / NCIMB 9375 / NCTC 10341 / NRRL NRS-1264 / Gibson 46).